The chain runs to 356 residues: Phospho-N-acetylmuramoyl-pentapeptide-transferase (356 aa).

A run of 9 helical transmembrane segments spans residues 27-47 (AAAITALLIGLIFGPRFIGWM), 74-94 (MGGLMILIAVSISLFLWMDFA), 97-117 (YVWACIAVMLGFGVIGFIDDY), 128-148 (VSGKVRLLWEFGIAFFACYLI), 164-184 (PVIDLGWFYYPFAAFVIVGTA), 201-221 (VIIASLAFFVISYVVGNAVFA), 241-261 (AIIGAGFAFLWFNAPPAAIFM), 284-304 (IVLGIVGGLFVAEALSVIIQV), and 333-353 (TVVIRFWIISFALALLGLATL).

This sequence belongs to the glycosyltransferase 4 family. MraY subfamily. It depends on Mg(2+) as a cofactor.

It is found in the cell inner membrane. The catalysed reaction is UDP-N-acetyl-alpha-D-muramoyl-L-alanyl-gamma-D-glutamyl-meso-2,6-diaminopimeloyl-D-alanyl-D-alanine + di-trans,octa-cis-undecaprenyl phosphate = di-trans,octa-cis-undecaprenyl diphospho-N-acetyl-alpha-D-muramoyl-L-alanyl-D-glutamyl-meso-2,6-diaminopimeloyl-D-alanyl-D-alanine + UMP. The protein operates within cell wall biogenesis; peptidoglycan biosynthesis. In terms of biological role, catalyzes the initial step of the lipid cycle reactions in the biosynthesis of the cell wall peptidoglycan: transfers peptidoglycan precursor phospho-MurNAc-pentapeptide from UDP-MurNAc-pentapeptide onto the lipid carrier undecaprenyl phosphate, yielding undecaprenyl-pyrophosphoryl-MurNAc-pentapeptide, known as lipid I. The polypeptide is Phospho-N-acetylmuramoyl-pentapeptide-transferase (Zymomonas mobilis subsp. mobilis (strain ATCC 31821 / ZM4 / CP4)).